Here is a 192-residue protein sequence, read N- to C-terminus: MTSALVLLGYLAGSIPFGVLLTRWLRGVDVRTGGSGNIGATNVTRVAGKKLGAVVLLLDAIKGALPVVLAVRLLPDAPTVHVAVGLAAVLGHIYPVWLKLQGGKGVATALGVLLVLVPQAALAAALVYVAVFAVSRVSSLGSLAAGATAVGTSALTARAVEYAGLSALLFALMLWTHRGNILRLARRTERRF.

A run of 5 helical transmembrane segments spans residues 1–21, 51–71, 78–98, 112–132, and 155–175; these read MTSA…GVLL, LGAV…VLAV, PTVH…PVWL, VLLV…VAVF, and LTAR…LMLW.

This sequence belongs to the PlsY family. Probably interacts with PlsX.

The protein localises to the cell inner membrane. The enzyme catalyses an acyl phosphate + sn-glycerol 3-phosphate = a 1-acyl-sn-glycero-3-phosphate + phosphate. The protein operates within lipid metabolism; phospholipid metabolism. Its function is as follows. Catalyzes the transfer of an acyl group from acyl-phosphate (acyl-PO(4)) to glycerol-3-phosphate (G3P) to form lysophosphatidic acid (LPA). This enzyme utilizes acyl-phosphate as fatty acyl donor, but not acyl-CoA or acyl-ACP. The polypeptide is Glycerol-3-phosphate acyltransferase (Myxococcus xanthus (strain DK1622)).